A 642-amino-acid chain; its full sequence is Chaperone protein DnaK (642 aa).

Thr-200 carries the phosphothreonine; by autocatalysis modification. The segment covering 600–616 (EAAQQSAGAAGPMPGAP) has biased composition (low complexity). The segment at 600–642 (EAAQQSAGAAGPMPGAPAEEEPSDGPRKAKGRVVDAEIVDDDK) is disordered. Over residues 623–634 (DGPRKAKGRVVD) the composition is skewed to basic and acidic residues.

This sequence belongs to the heat shock protein 70 family.

In terms of biological role, acts as a chaperone. The sequence is that of Chaperone protein DnaK from Akkermansia muciniphila (strain ATCC BAA-835 / DSM 22959 / JCM 33894 / BCRC 81048 / CCUG 64013 / CIP 107961 / Muc).